Here is a 170-residue protein sequence, read N- to C-terminus: Putative pre-16S rRNA nuclease (170 aa).

Positions 1-29 are disordered; that stretch reads MVAASHRSPDRPGDPEGLEPGTGRGRRLG.

It belongs to the YqgF nuclease family.

The protein localises to the cytoplasm. In terms of biological role, could be a nuclease involved in processing of the 5'-end of pre-16S rRNA. In Mycobacterium ulcerans (strain Agy99), this protein is Putative pre-16S rRNA nuclease.